The chain runs to 529 residues: GTPase Obg (529 aa).

Positions 2–159 (PTFVDRVVLH…LDAVLELKTV (158 aa)) constitute an Obg domain. Residues 62–86 (FHPHQRASRGRPGQGSNRHGADGAD) form a disordered region. The OBG-type G domain maps to 160-332 (ADVALVGFPS…LSLALADLVA (173 aa)). GTP-binding positions include 166-173 (GFPSAGKS), 191-195 (FTTLV), 213-216 (DVPG), 284-287 (NKID), and 313-315 (STA). Residues S173 and T193 each contribute to the Mg(2+) site. The region spanning 350–427 (PRAVNEPDFT…IGEVTFDWEP (78 aa)) is the OCT domain. Disordered stretches follow at residues 434–494 (LGNG…DRLR) and 506–529 (ARRA…EEEG). Low complexity-rich tracts occupy residues 461–472 (AGTAASGAAPSP) and 508–520 (RAAA…VRGE).

It belongs to the TRAFAC class OBG-HflX-like GTPase superfamily. OBG GTPase family. In terms of assembly, monomer. Mg(2+) is required as a cofactor.

The protein resides in the cytoplasm. An essential GTPase which binds GTP, GDP and possibly (p)ppGpp with moderate affinity, with high nucleotide exchange rates and a fairly low GTP hydrolysis rate. Plays a role in control of the cell cycle, stress response, ribosome biogenesis and in those bacteria that undergo differentiation, in morphogenesis control. This Frankia casuarinae (strain DSM 45818 / CECT 9043 / HFP020203 / CcI3) protein is GTPase Obg.